The chain runs to 212 residues: Deoxyribose-phosphate aldolase (212 aa).

The Proton donor/acceptor role is filled by Asp89. Lys151 functions as the Schiff-base intermediate with acetaldehyde in the catalytic mechanism. Residue Lys180 is the Proton donor/acceptor of the active site.

The protein belongs to the DeoC/FbaB aldolase family. DeoC type 1 subfamily.

Its subcellular location is the cytoplasm. It catalyses the reaction 2-deoxy-D-ribose 5-phosphate = D-glyceraldehyde 3-phosphate + acetaldehyde. It participates in carbohydrate degradation; 2-deoxy-D-ribose 1-phosphate degradation; D-glyceraldehyde 3-phosphate and acetaldehyde from 2-deoxy-alpha-D-ribose 1-phosphate: step 2/2. Catalyzes a reversible aldol reaction between acetaldehyde and D-glyceraldehyde 3-phosphate to generate 2-deoxy-D-ribose 5-phosphate. The sequence is that of Deoxyribose-phosphate aldolase from Clostridium botulinum (strain ATCC 19397 / Type A).